Consider the following 454-residue polypeptide: Inner membrane permease YgbN (454 aa).

Methionine 1 is a topological domain (periplasmic). The chain crosses the membrane as a helical span at residues 2–22 (STITLLCIALAGVIMLLLLVI). Over 23–27 (KAKVQ) the chain is Cytoplasmic. A helical transmembrane segment spans residues 28 to 48 (PFVALLLVSLLVALAAGIPAG). Residues 49–52 (EVGK) lie on the Periplasmic side of the membrane. Residues 53–73 (VMIAGMGGVLGSVTIIIGLGA) traverse the membrane as a helical segment. Residues 74–108 (MLGRMIEHSGGAESLANYFSRKLGDKRTIAALTLA) are Cytoplasmic-facing. Residues 109-129 (AFFLGIPVFFDVGFIILAPII) form a helical membrane-spanning segment. The Periplasmic portion of the chain corresponds to 130 to 137 (YGFAKVAK). Residues 138-158 (ISPLKFGLPVAGIMLTVHVAV) traverse the membrane as a helical segment. Over 159–174 (PPHPGPVAAAGLLHAD) the chain is Cytoplasmic. Residues 175–195 (IGWLTIIGIAISIPVGVVGYF) form a helical membrane-spanning segment. Over 196-235 (AAKIINKRQYAMSVEVLEQMQLAPASEEGATKLSDKINPP) the chain is Periplasmic. The helical transmembrane segment at 236 to 256 (GVALVTSLIVIPIAIIMAGTV) threads the bilayer. The Cytoplasmic portion of the chain corresponds to 257-273 (SATLMPPSHPLLGTLQL). The chain crosses the membrane as a helical span at residues 274 to 294 (IGSPMVALMIALVLAFWLLAL). Over 295-305 (RRGWSLQHTSD) the chain is Periplasmic. A helical transmembrane segment spans residues 306–326 (IMGSALPTAAVVILVTGAGGV). The Cytoplasmic segment spans residues 327-341 (FGKVLVESGVGKALA). The helical transmembrane segment at 342–362 (NMLQMIDLPLLPAAFIISLAL) threads the bilayer. The Periplasmic portion of the chain corresponds to 363–383 (RASQGSATVAILTTGGLLSEA). Residues 384-404 (VMGLNPIQCVLVTLAACFGGL) traverse the membrane as a helical segment. Residues 405 to 433 (GASHINDSGFWIVTKYLGLSVADGLKTWT) are Cytoplasmic-facing. The chain crosses the membrane as a helical span at residues 434–454 (VLTTILGFTGFLITWCVWAVI).

This sequence belongs to the GntP permease family.

It is found in the cell inner membrane. In Escherichia coli (strain K12), this protein is Inner membrane permease YgbN (ygbN).